Reading from the N-terminus, the 300-residue chain is N-acetylmuramic acid 6-phosphate etherase (300 aa).

The 164-residue stretch at 57-220 (IAVAFQSGGR…TTGAMIRTGK (164 aa)) folds into the SIS domain. The active-site Proton donor is the Glu85. The active site involves Glu116.

Belongs to the GCKR-like family. MurNAc-6-P etherase subfamily. Homodimer.

The enzyme catalyses N-acetyl-D-muramate 6-phosphate + H2O = N-acetyl-D-glucosamine 6-phosphate + (R)-lactate. It functions in the pathway amino-sugar metabolism; 1,6-anhydro-N-acetylmuramate degradation. Its pathway is amino-sugar metabolism; N-acetylmuramate degradation. It participates in cell wall biogenesis; peptidoglycan recycling. Specifically catalyzes the cleavage of the D-lactyl ether substituent of MurNAc 6-phosphate, producing GlcNAc 6-phosphate and D-lactate. Together with AnmK, is also required for the utilization of anhydro-N-acetylmuramic acid (anhMurNAc) either imported from the medium or derived from its own cell wall murein, and thus plays a role in cell wall recycling. This Aliivibrio fischeri (strain ATCC 700601 / ES114) (Vibrio fischeri) protein is N-acetylmuramic acid 6-phosphate etherase.